A 1006-amino-acid chain; its full sequence is Probable protein phosphatase DDB_G0279461 (1006 aa).

The segment covering 1–12 (MMVPSLSTSISS) has biased composition (polar residues). Disordered regions lie at residues 1-119 (MMVP…NNKE), 146-188 (SHAS…RSNS), 214-269 (SSED…NGIR), 312-387 (DAES…PPNQ), 459-513 (NINN…NNIQ), 525-563 (DYNI…NSKF), and 604-642 (GSIP…TSAS). Positions 59–69 (NEEEGTADNEL) are enriched in acidic residues. Residues 65–122 (ADNELESLMSLVNDNNNNNNNTSGIDDDNNNDIDDNNNNNNNNNNNNNNNNNNKEGLN) are a coiled coil. A compositionally biased stretch (low complexity) spans 77 to 88 (NDNNNNNNNTSG). Residues 89 to 99 (IDDDNNNDIDD) are compositionally biased toward acidic residues. The segment covering 100–117 (NNNNNNNNNNNNNNNNNN) has biased composition (low complexity). Positions 146-158 (SHASVSNQSSNGS) are enriched in polar residues. Composition is skewed to low complexity over residues 220 to 234 (SCHN…NKNN), 244 to 254 (NINNNNNNNCN), and 316 to 387 (NYNN…PPNQ). Residues 450-516 (KIDNLNKNIN…NNNNNIQDIQ (67 aa)) adopt a coiled-coil conformation. Residues 466 to 481 (TDSQQPLPSIDVNFSH) show a composition bias toward polar residues. Over residues 482 to 511 (NNNNNNNDNDNNNNNNNNNNNNNNNNNNNN) the composition is skewed to low complexity. Over residues 525–538 (DYNIQEGNDINNDN) the composition is skewed to polar residues. 2 stretches are compositionally biased toward low complexity: residues 552-561 (SSNNNNNNNS) and 613-639 (NNNN…TTTT). Residues 744-1005 (DINKRGLKRA…DNISIIVVTL (262 aa)) form the PPM-type phosphatase domain. Mn(2+)-binding residues include aspartate 784, glycine 785, aspartate 956, and aspartate 996.

The protein in the C-terminal section; belongs to the PP2C family. It depends on Mg(2+) as a cofactor. Requires Mn(2+) as cofactor.

The catalysed reaction is O-phospho-L-seryl-[protein] + H2O = L-seryl-[protein] + phosphate. It carries out the reaction O-phospho-L-threonyl-[protein] + H2O = L-threonyl-[protein] + phosphate. The sequence is that of Probable protein phosphatase DDB_G0279461 from Dictyostelium discoideum (Social amoeba).